Consider the following 302-residue polypeptide: GTPase Era (302 aa).

Positions 10–178 (RCGYVAIVGR…EAQIAKHLPE (169 aa)) constitute an Era-type G domain. Residues 18 to 25 (GRPNVGKS) are G1. 18–25 (GRPNVGKS) is a binding site for GTP. Residues 44 to 48 (QTTRH) are G2. The segment at 65 to 68 (DTPG) is G3. Residues 65-69 (DTPGM) and 127-130 (NKTD) each bind GTP. The segment at 127 to 130 (NKTD) is G4. Residues 157 to 159 (ISA) form a G5 region. The KH type-2 domain occupies 201–285 (VREKIMRQLG…MLNLWVKVKG (85 aa)).

This sequence belongs to the TRAFAC class TrmE-Era-EngA-EngB-Septin-like GTPase superfamily. Era GTPase family. As to quaternary structure, monomer.

It is found in the cytoplasm. The protein resides in the cell inner membrane. An essential GTPase that binds both GDP and GTP, with rapid nucleotide exchange. Plays a role in 16S rRNA processing and 30S ribosomal subunit biogenesis and possibly also in cell cycle regulation and energy metabolism. The sequence is that of GTPase Era from Pseudomonas putida (strain ATCC 47054 / DSM 6125 / CFBP 8728 / NCIMB 11950 / KT2440).